The chain runs to 1455 residues: DNA polymerase II large subunit (1455 aa).

Residues 1409 to 1440 (GLLENLSNGSKKTEKAEKAEKPRKKSDEKPKK) are disordered. Residues 1419–1438 (KKTEKAEKAEKPRKKSDEKP) show a composition bias toward basic and acidic residues.

It belongs to the archaeal DNA polymerase II family. As to quaternary structure, heterodimer of a large subunit and a small subunit. Post-translationally, this protein undergoes a protein self splicing that involves a post-translational excision of the intervening region (intein) followed by peptide ligation.

It carries out the reaction DNA(n) + a 2'-deoxyribonucleoside 5'-triphosphate = DNA(n+1) + diphosphate. It catalyses the reaction Exonucleolytic cleavage in the 3'- to 5'-direction to yield nucleoside 5'-phosphates.. Possesses two activities: a DNA synthesis (polymerase) and an exonucleolytic activity that degrades single-stranded DNA in the 3'- to 5'-direction. Has a template-primer preference which is characteristic of a replicative DNA polymerase. This Pyrococcus abyssi (strain GE5 / Orsay) protein is DNA polymerase II large subunit (polC).